Reading from the N-terminus, the 237-residue chain is Urease accessory protein UreF (237 aa).

Belongs to the UreF family. UreD, UreF and UreG form a complex that acts as a GTP-hydrolysis-dependent molecular chaperone, activating the urease apoprotein by helping to assemble the nickel containing metallocenter of UreC. The UreE protein probably delivers the nickel.

The protein resides in the cytoplasm. Its function is as follows. Required for maturation of urease via the functional incorporation of the urease nickel metallocenter. The polypeptide is Urease accessory protein UreF (Rhodopseudomonas palustris (strain HaA2)).